The following is a 113-amino-acid chain: Large ribosomal subunit protein uL24 (113 aa).

The protein belongs to the universal ribosomal protein uL24 family. Part of the 50S ribosomal subunit.

In terms of biological role, one of two assembly initiator proteins, it binds directly to the 5'-end of the 23S rRNA, where it nucleates assembly of the 50S subunit. Functionally, one of the proteins that surrounds the polypeptide exit tunnel on the outside of the subunit. In Micrococcus luteus (strain ATCC 4698 / DSM 20030 / JCM 1464 / CCM 169 / CCUG 5858 / IAM 1056 / NBRC 3333 / NCIMB 9278 / NCTC 2665 / VKM Ac-2230) (Micrococcus lysodeikticus), this protein is Large ribosomal subunit protein uL24.